A 210-amino-acid chain; its full sequence is Small ribosomal subunit protein uS3 (210 aa).

The 69-residue stretch at 38 to 106 (LRSFLKKRLY…EVYLNIQEVR (69 aa)) folds into the KH type-2 domain.

Belongs to the universal ribosomal protein uS3 family. As to quaternary structure, part of the 30S ribosomal subunit. Forms a tight complex with proteins S10 and S14.

In terms of biological role, binds the lower part of the 30S subunit head. Binds mRNA in the 70S ribosome, positioning it for translation. The chain is Small ribosomal subunit protein uS3 from Geotalea uraniireducens (strain Rf4) (Geobacter uraniireducens).